Reading from the N-terminus, the 412-residue chain is Multifunctional CCA protein (412 aa).

ATP is bound by residues glycine 8 and arginine 11. Residues glycine 8 and arginine 11 each coordinate CTP. Mg(2+) contacts are provided by aspartate 21 and aspartate 23. 3 residues coordinate ATP: arginine 91, arginine 137, and arginine 140. The CTP site is built by arginine 91, arginine 137, and arginine 140. An HD domain is found at 226–327 (TGEHVLMVVE…VKVLERCDAL (102 aa)).

This sequence belongs to the tRNA nucleotidyltransferase/poly(A) polymerase family. Bacterial CCA-adding enzyme type 1 subfamily. As to quaternary structure, monomer. Can also form homodimers and oligomers. Requires Mg(2+) as cofactor. Ni(2+) serves as cofactor.

The catalysed reaction is a tRNA precursor + 2 CTP + ATP = a tRNA with a 3' CCA end + 3 diphosphate. It catalyses the reaction a tRNA with a 3' CCA end + 2 CTP + ATP = a tRNA with a 3' CCACCA end + 3 diphosphate. Its function is as follows. Catalyzes the addition and repair of the essential 3'-terminal CCA sequence in tRNAs without using a nucleic acid template. Adds these three nucleotides in the order of C, C, and A to the tRNA nucleotide-73, using CTP and ATP as substrates and producing inorganic pyrophosphate. tRNA 3'-terminal CCA addition is required both for tRNA processing and repair. Also involved in tRNA surveillance by mediating tandem CCA addition to generate a CCACCA at the 3' terminus of unstable tRNAs. While stable tRNAs receive only 3'-terminal CCA, unstable tRNAs are marked with CCACCA and rapidly degraded. The protein is Multifunctional CCA protein of Azoarcus sp. (strain BH72).